Consider the following 504-residue polypeptide: Maturase K (504 aa).

Belongs to the intron maturase 2 family. MatK subfamily.

It localises to the plastid. The protein resides in the chloroplast. Its function is as follows. Usually encoded in the trnK tRNA gene intron. Probably assists in splicing its own and other chloroplast group II introns. The polypeptide is Maturase K (Quercus cerris (Turkey oak)).